A 56-amino-acid chain; its full sequence is Preprotein translocase subunit SecG (56 aa).

Over 1 to 29 (MAKDKTTLPPTGAGLMRFFDEDTRAIKVS) the chain is Cytoplasmic. The helical transmembrane segment at 30-51 (PKGVIAIVLVLIAFEVFLHLFG) threads the bilayer. Over 52 to 56 (PSIFG) the chain is Extracellular.

Belongs to the SEC61-beta family. Component of the protein translocase complex. Heterotrimer consisting of alpha (SecY), beta (SecG) and gamma (SecE) subunits. Can form oligomers of the heterotrimer.

It localises to the cell membrane. Its function is as follows. Involved in protein export. The function of the beta subunit is unknown, but it may be involved in stabilization of the trimeric complex. The polypeptide is Preprotein translocase subunit SecG (Thermococcus gammatolerans (strain DSM 15229 / JCM 11827 / EJ3)).